A 424-amino-acid polypeptide reads, in one-letter code: Synaptotagmin-1 (424 aa).

At M1 to P60 the chain is on the vesicular side. N-linked (GlcNAc...) asparagine glycosylation occurs at N25. Residues W61–C82 traverse the membrane as a helical segment. 5 S-palmitoyl cysteine lipidation sites follow: C77, C78, C80, C82, and C85. Residues K83–K424 are Cytoplasmic-facing. Positions K117 to V142 are disordered. Positions D124–K136 are enriched in acidic residues. Residues E138 to N384 form a phospholipid binding region. C2 domains lie at K144 to R263 and K275 to H408. The Ca(2+) site is built by L174, D175, D181, D233, F234, D235, S238, K239, D241, D306, D312, D366, D368, and D374.

Belongs to the synaptotagmin family. In terms of assembly, homotetramer. Ca(2+) is required as a cofactor.

It localises to the cytoplasmic vesicle. It is found in the secretory vesicle membrane. Its subcellular location is the secretory vesicle. The protein resides in the synaptic vesicle membrane. The protein localises to the chromaffin granule membrane. It localises to the cytoplasm. Its function is as follows. Calcium sensor that participates in triggering neurotransmitter release at the synapse. May have a regulatory role in the membrane interactions during trafficking of synaptic vesicles at the active zone of the synapse. It binds acidic phospholipids with a specificity that requires the presence of both an acidic head group and a diacyl backbone. May play a role in dendrite formation by melanocytes. The sequence is that of Synaptotagmin-1 (SYT1) from Gallus gallus (Chicken).